The primary structure comprises 587 residues: Methylcrotonoyl-CoA carboxylase beta chain, mitochondrial (587 aa).

Residues 1–26 constitute a mitochondrion transit peptide; sequence MLRILGRRVVSASKELTSIQQWRIRP. The 257-residue stretch at 68–324 folds into the CoA carboxyltransferase N-terminal domain; it reads MEGILSELRS…AAKQGMEGTF (257 aa). The carboxyltransferase stretch occupies residues 68–579; the sequence is MEGILSELRS…SAALNRPLED (512 aa). Residues 333 to 579 form the CoA carboxyltransferase C-terminal domain; that stretch reads EPLYDINELR…SAALNRPLED (247 aa). Positions 367-396 are acyl-CoA binding; that stretch reads EFDEFKKQYGTTLVTGFARIYGQTVGIIGN.

Belongs to the AccD/PCCB family. Probably a heterodimer composed of biotin-containing alpha subunits and beta subunits. In roots, cotyledons, leaves, flowers, ovaries, siliques and embryos.

It localises to the mitochondrion matrix. It carries out the reaction 3-methylbut-2-enoyl-CoA + hydrogencarbonate + ATP = 3-methyl-(2E)-glutaconyl-CoA + ADP + phosphate + H(+). Its pathway is amino-acid degradation; L-leucine degradation; (S)-3-hydroxy-3-methylglutaryl-CoA from 3-isovaleryl-CoA: step 2/3. Carboxyltransferase subunit of the 3-methylcrotonyl-CoA carboxylase, an enzyme that catalyzes the conversion of 3-methylcrotonyl-CoA to 3-methylglutaconyl-CoA, a critical step for leucine and isovaleric acid catabolism. This Arabidopsis thaliana (Mouse-ear cress) protein is Methylcrotonoyl-CoA carboxylase beta chain, mitochondrial (MCCB).